A 159-amino-acid chain; its full sequence is Ribosomal RNA large subunit methyltransferase H (159 aa).

2 residues coordinate S-adenosyl-L-methionine: L76 and G108.

Belongs to the RNA methyltransferase RlmH family. In terms of assembly, homodimer.

It is found in the cytoplasm. It catalyses the reaction pseudouridine(1915) in 23S rRNA + S-adenosyl-L-methionine = N(3)-methylpseudouridine(1915) in 23S rRNA + S-adenosyl-L-homocysteine + H(+). Its function is as follows. Specifically methylates the pseudouridine at position 1915 (m3Psi1915) in 23S rRNA. The sequence is that of Ribosomal RNA large subunit methyltransferase H from Ligilactobacillus salivarius (strain UCC118) (Lactobacillus salivarius).